Consider the following 449-residue polypeptide: POU domain, class 3, transcription factor 1 (449 aa).

Disordered regions lie at residues 1–22 (MATT…TGPL), 76–108 (GGGG…GGGG), 132–152 (AHHL…HQPQ), 184–251 (GLHH…PSSD), and 393–449 (KRMT…GSVQ). 2 stretches are compositionally biased toward gly residues: residues 11–20 (GPGGGAGGTG) and 93–108 (AGGG…GGGG). The segment covering 132–143 (AHHLGPAMSPSP) has biased composition (low complexity). The span at 188–197 (ALHEDGHEAQ) shows a compositional bias: basic and acidic residues. Positions 218-230 (AGGLHAAAAHLHP) are enriched in low complexity. The region spanning 245 to 319 (EDAPSSDDLE…LLNKWLEETD (75 aa)) is the POU-specific domain. The homeobox DNA-binding region spans 337–396 (KRKKRTSIEVGVKGALESHFLKCPKPSAHEITGLADSLQLEKEVVRVWFCNRRQKEKRMT). A compositionally biased stretch (pro residues) spans 425–434 (PSAPPPPPPA).

Belongs to the POU transcription factor family. Class-3 subfamily.

The protein resides in the nucleus. Functionally, transcription factor that binds to the octamer motif (5'-ATTTGCAT-3'). Acts as a transcriptional activator when binding cooperatively with SOX4, SOX11, or SOX12 to gene promoters. Acts as a transcriptional repressor of myelin-specific genes. This is POU domain, class 3, transcription factor 1 (Pou3f1) from Mus musculus (Mouse).